We begin with the raw amino-acid sequence, 416 residues long: Multifunctional CCA protein (416 aa).

ATP is bound by residues Gly-8 and Arg-11. Residues Gly-8 and Arg-11 each coordinate CTP. The Mg(2+) site is built by Asp-21 and Asp-23. ATP-binding residues include Arg-91, Arg-137, and Arg-140. The CTP site is built by Arg-91, Arg-137, and Arg-140. The region spanning Thr-226–Phe-327 is the HD domain.

This sequence belongs to the tRNA nucleotidyltransferase/poly(A) polymerase family. Bacterial CCA-adding enzyme type 1 subfamily. As to quaternary structure, monomer. Can also form homodimers and oligomers. Mg(2+) is required as a cofactor. It depends on Ni(2+) as a cofactor.

The enzyme catalyses a tRNA precursor + 2 CTP + ATP = a tRNA with a 3' CCA end + 3 diphosphate. It catalyses the reaction a tRNA with a 3' CCA end + 2 CTP + ATP = a tRNA with a 3' CCACCA end + 3 diphosphate. In terms of biological role, catalyzes the addition and repair of the essential 3'-terminal CCA sequence in tRNAs without using a nucleic acid template. Adds these three nucleotides in the order of C, C, and A to the tRNA nucleotide-73, using CTP and ATP as substrates and producing inorganic pyrophosphate. tRNA 3'-terminal CCA addition is required both for tRNA processing and repair. Also involved in tRNA surveillance by mediating tandem CCA addition to generate a CCACCA at the 3' terminus of unstable tRNAs. While stable tRNAs receive only 3'-terminal CCA, unstable tRNAs are marked with CCACCA and rapidly degraded. The sequence is that of Multifunctional CCA protein from Janthinobacterium sp. (strain Marseille) (Minibacterium massiliensis).